A 478-amino-acid polypeptide reads, in one-letter code: Protein nucleotidyltransferase YdiU (478 aa).

ATP contacts are provided by Gly-83, Gly-85, Arg-86, Lys-106, Asp-118, Gly-119, Arg-169, and Arg-176. Catalysis depends on Asp-245, which acts as the Proton acceptor. Mg(2+) is bound by residues Asn-246 and Asp-255. Asp-255 provides a ligand contact to ATP.

The protein belongs to the SELO family. Mg(2+) is required as a cofactor. Mn(2+) serves as cofactor.

It carries out the reaction L-seryl-[protein] + ATP = 3-O-(5'-adenylyl)-L-seryl-[protein] + diphosphate. The catalysed reaction is L-threonyl-[protein] + ATP = 3-O-(5'-adenylyl)-L-threonyl-[protein] + diphosphate. The enzyme catalyses L-tyrosyl-[protein] + ATP = O-(5'-adenylyl)-L-tyrosyl-[protein] + diphosphate. It catalyses the reaction L-histidyl-[protein] + UTP = N(tele)-(5'-uridylyl)-L-histidyl-[protein] + diphosphate. It carries out the reaction L-seryl-[protein] + UTP = O-(5'-uridylyl)-L-seryl-[protein] + diphosphate. The catalysed reaction is L-tyrosyl-[protein] + UTP = O-(5'-uridylyl)-L-tyrosyl-[protein] + diphosphate. Functionally, nucleotidyltransferase involved in the post-translational modification of proteins. It can catalyze the addition of adenosine monophosphate (AMP) or uridine monophosphate (UMP) to a protein, resulting in modifications known as AMPylation and UMPylation. This is Protein nucleotidyltransferase YdiU from Exiguobacterium sp. (strain ATCC BAA-1283 / AT1b).